The chain runs to 700 residues: Myotubularin-related protein 11 (700 aa).

The segment at 1 to 39 is disordered; sequence MWWGGRGQSFNIAPQKEEPEMGLSGPKSNPGNRMPEPSS. Residues 201–644 enclose the Myotubularin phosphatase domain; sequence LETLEDWETE…PQIRFWKRCY (444 aa).

This sequence belongs to the protein-tyrosine phosphatase family. Non-receptor class myotubularin subfamily.

The protein is Myotubularin-related protein 11 (Mtmr11) of Mus musculus (Mouse).